Reading from the N-terminus, the 305-residue chain is Aspartate carbamoyltransferase catalytic subunit (305 aa).

Arg-56 and Thr-57 together coordinate carbamoyl phosphate. Lys-85 is an L-aspartate binding site. The carbamoyl phosphate site is built by Arg-106, His-134, and Gln-137. L-aspartate is bound by residues Arg-167 and Arg-227. Leu-266 and Pro-267 together coordinate carbamoyl phosphate.

The protein belongs to the aspartate/ornithine carbamoyltransferase superfamily. ATCase family. In terms of assembly, heterooligomer of catalytic and regulatory chains.

It carries out the reaction carbamoyl phosphate + L-aspartate = N-carbamoyl-L-aspartate + phosphate + H(+). It participates in pyrimidine metabolism; UMP biosynthesis via de novo pathway; (S)-dihydroorotate from bicarbonate: step 2/3. Its function is as follows. Catalyzes the condensation of carbamoyl phosphate and aspartate to form carbamoyl aspartate and inorganic phosphate, the committed step in the de novo pyrimidine nucleotide biosynthesis pathway. The chain is Aspartate carbamoyltransferase catalytic subunit from Thermoplasma volcanium (strain ATCC 51530 / DSM 4299 / JCM 9571 / NBRC 15438 / GSS1).